The chain runs to 274 residues: Hydroxyethylthiazole kinase (274 aa).

Met-49 is a substrate binding site. Positions 125 and 173 each coordinate ATP. Gly-200 provides a ligand contact to substrate.

This sequence belongs to the Thz kinase family. It depends on Mg(2+) as a cofactor.

It catalyses the reaction 5-(2-hydroxyethyl)-4-methylthiazole + ATP = 4-methyl-5-(2-phosphooxyethyl)-thiazole + ADP + H(+). The protein operates within cofactor biosynthesis; thiamine diphosphate biosynthesis; 4-methyl-5-(2-phosphoethyl)-thiazole from 5-(2-hydroxyethyl)-4-methylthiazole: step 1/1. Its function is as follows. Catalyzes the phosphorylation of the hydroxyl group of 4-methyl-5-beta-hydroxyethylthiazole (THZ). This is Hydroxyethylthiazole kinase from Desulfosudis oleivorans (strain DSM 6200 / JCM 39069 / Hxd3) (Desulfococcus oleovorans).